A 434-amino-acid polypeptide reads, in one-letter code: MEATTAQANELERRVDLSIAIADVEKEMEQRLKRMGKNMKVPGFRPGKVPFNIVKQQYGDQARHEVLSEELDRVFGETVTEKKMRVAGYPRIEPKTTESNSHLEFSAIFEVYPEFTPGDLSGSEVERPVLEVSAAEVDKTLDILRKQRVSYADADRAAAKEDRVVIDFTGKKDGVPFPGGQANDYPFVLGQGMMLPDFENAVEGAKAGETKTFDLTFPADYHAKDLAGQTVQFDITVKQVQAPVLPELDAEFATSMGIADGDVTKMRAEIEANLKREVKRRIEGKLKDQVMEALLKANPITVPVALVDMEIQRLMQAARQDMEQRGMKVKDMPIQPEWFADQAKRRVTLGLILAEVVKTEKLQASPEQVRTMVEETAQSYEHPEEVIRWYYAQPQRLQEVEGVAIENNVVEWVLSKAKVTEKAAVFDELMGQKQ.

The PPIase FKBP-type domain occupies 161–246 (EDRVVIDFTG…VKQVQAPVLP (86 aa)).

It belongs to the FKBP-type PPIase family. Tig subfamily.

It is found in the cytoplasm. It carries out the reaction [protein]-peptidylproline (omega=180) = [protein]-peptidylproline (omega=0). Functionally, involved in protein export. Acts as a chaperone by maintaining the newly synthesized protein in an open conformation. Functions as a peptidyl-prolyl cis-trans isomerase. In Dechloromonas aromatica (strain RCB), this protein is Trigger factor.